We begin with the raw amino-acid sequence, 163 residues long: 3-isopropylmalate dehydratase small subunit (163 aa).

The protein belongs to the LeuD family. LeuD type 2 subfamily. In terms of assembly, heterodimer of LeuC and LeuD.

It catalyses the reaction (2R,3S)-3-isopropylmalate = (2S)-2-isopropylmalate. Its pathway is amino-acid biosynthesis; L-leucine biosynthesis; L-leucine from 3-methyl-2-oxobutanoate: step 2/4. Functionally, catalyzes the isomerization between 2-isopropylmalate and 3-isopropylmalate, via the formation of 2-isopropylmaleate. In Thermococcus kodakarensis (strain ATCC BAA-918 / JCM 12380 / KOD1) (Pyrococcus kodakaraensis (strain KOD1)), this protein is 3-isopropylmalate dehydratase small subunit.